A 615-amino-acid chain; its full sequence is Erythritol-mannosyl-transferase 1 (615 aa).

The tract at residues 366-387 is disordered; it reads RTPNNTGASTPTAPISSPDFEE. Positions 367–380 are enriched in polar residues; the sequence is TPNNTGASTPTAPI.

Belongs to the UDP-glycosyltransferase family.

It localises to the vacuole membrane. The protein operates within secondary metabolite biosynthesis. Erythritol-mannosyl-transferase; part of the gene cluster that mediates the biosynthesis of mannosylerythritol lipids (MELs), surface-active substances that enhance the availability of water-insoluble substrates. Mannosylerythritol lipid production is responsible for hemolytic activity of Ustilago maydis. Depending on the number of acetyl groups, mannosylerythritol lipids can be differentiated into MEL A (fully acetylated), MEL B and MEL C (monoacetylated at R-6 and R-4, respectively), and the fully deacetylated MEL D. The first step in the pathway is the generation of mannosylerythritol by the glycosyltransferase EMT1 which catalyzes the transfer of GDP-mannose to the C-4 atom of meso-erythritol. This reaction has to be stereospecific, since only mannosyl-D-erythritol is generated. The produced disaccharide is subsequently acylated with fatty acids of various lengths derived from the peroxisomal beta-oxidation by the peroxisomal acyltransferases MAC1 and MAC2 at positions C-2 and C-3, repectively. The existence of MEL derivatives which carry an acetyl group at C-2 implies that at least MAC1 also accepts acetyl-CoA as a donor. The final step of MEL biosynthesis is the acetylation of the fully acylated mannosylerythritol lipids catalyzed by the acetyl-CoA-dependent acetyltransferase MAT1. MAT1 displays a relaxed regioselectivity and is able to transfer acetylgroups to both positions C-4 and C-6 of the mannosyl moiety. The protein is Erythritol-mannosyl-transferase 1 of Mycosarcoma maydis (Corn smut fungus).